A 125-amino-acid polypeptide reads, in one-letter code: MNSLEQAEDLKAFERRLTEYVSCLQPATGRWRMILIVVSVCTATGAWNWLIDPETQKVSFFTSLWNHPFFTISCITLIGLFFAGIHKRVVAPSIIAARCRTVLAEYNMSCDDTGKLILKPRPHVQ.

A run of 2 helical transmembrane segments spans residues methionine 33–proline 53 and tryptophan 65–isoleucine 85.

This sequence belongs to the CNEP1R1 family.

The protein resides in the nucleus membrane. Its subcellular location is the cytoplasm. May form with the serine/threonine protein phosphatase ctdnep1 an active complex dephosphorylating and activating lipins. Lipins are phosphatidate phosphatases that catalyze the conversion of phosphatidic acid to diacylglycerol and control the metabolism of fatty acids at different levels. May indirectly modulate the lipid composition of nuclear and/or endoplasmic reticulum membranes and be required for proper nuclear membrane morphology and/or dynamics. May also indirectly regulate the production of lipid droplets and triacylglycerol. This Xenopus tropicalis (Western clawed frog) protein is Nuclear envelope phosphatase-regulatory subunit 1 (cnep1r1).